We begin with the raw amino-acid sequence, 509 residues long: Lysine--tRNA ligase (509 aa).

Positions 418 and 425 each coordinate Mg(2+).

It belongs to the class-II aminoacyl-tRNA synthetase family. As to quaternary structure, homodimer. Mg(2+) is required as a cofactor.

The protein localises to the cytoplasm. It carries out the reaction tRNA(Lys) + L-lysine + ATP = L-lysyl-tRNA(Lys) + AMP + diphosphate. In Acinetobacter baumannii (strain ATCC 17978 / DSM 105126 / CIP 53.77 / LMG 1025 / NCDC KC755 / 5377), this protein is Lysine--tRNA ligase.